The following is a 517-amino-acid chain: Putative pumilio homolog 21 (517 aa).

Disordered regions lie at residues 33–57, 69–94, 107–130, and 175–201; these read NHQEPGESGNTNINSNNNHPNPPLL, KNNQEPGESGNTTINRNKNHPNPPLV, NHQEPGESGTTNINNNNPNPPLLT, and FTPSSLTQPDDSSSRYSGKPFPPPPLS. A compositionally biased stretch (low complexity) spans 42 to 51; sequence NTNINSNNNH. Residues 69 to 84 show a composition bias toward polar residues; that stretch reads KNNQEPGESGNTTINR. A PUM-HD domain is found at 148–502; it reads ESSNNNYPNL…NTLRVIQEEI (355 aa). Residues 177 to 190 are compositionally biased toward polar residues; it reads PSSLTQPDDSSSRY. The Pumilio 1; degenerate repeat unit spans residues 258–293; that stretch reads TTKRIFLHLATNQYGSQALRILFRRSPSLDHLLFCA. One copy of the Pumilio 2 repeat lies at 294–328; it reads VDTNFFLLMSDKYGRGLIIPAIRAVDKTKKESLYK. Residues 329–363 form a Pumilio 3; degenerate repeat; that stretch reads LTYEYTLHLARLETGCLALNNVLQEIRGIYRDLIF. 3 Pumilio repeats span residues 364–400, 401–437, and 438–473; these read ECVANNADWLSFDPYGTHVVQNILILQNPVATTAIAE, RLRGSFFRLAMERQGSYVVEKCLKSDFARDQVLEEFR, and GNAKEWVRMTTDKFGNFVVQSALRVMKEKEMRPLLR.

Its subcellular location is the cytoplasm. Its function is as follows. Sequence-specific RNA-binding protein that regulates translation and mRNA stability by binding the 3'-UTR of target mRNAs. The sequence is that of Putative pumilio homolog 21 (APUM21) from Arabidopsis thaliana (Mouse-ear cress).